The chain runs to 290 residues: 33 kDa chaperonin (290 aa).

Cystine bridges form between Cys235–Cys237 and Cys268–Cys271.

Belongs to the HSP33 family. Post-translationally, under oxidizing conditions two disulfide bonds are formed involving the reactive cysteines. Under reducing conditions zinc is bound to the reactive cysteines and the protein is inactive.

The protein localises to the cytoplasm. Functionally, redox regulated molecular chaperone. Protects both thermally unfolding and oxidatively damaged proteins from irreversible aggregation. Plays an important role in the bacterial defense system toward oxidative stress. The chain is 33 kDa chaperonin from Streptococcus pyogenes serotype M12 (strain MGAS2096).